The primary structure comprises 151 residues: Aspartate carbamoyltransferase regulatory chain (151 aa).

Zn(2+) is bound by residues Cys-108, Cys-113, Cys-136, and Cys-139.

The protein belongs to the PyrI family. Contains catalytic and regulatory chains. Requires Zn(2+) as cofactor.

In terms of biological role, involved in allosteric regulation of aspartate carbamoyltransferase. This Porphyromonas gingivalis (strain ATCC 33277 / DSM 20709 / CIP 103683 / JCM 12257 / NCTC 11834 / 2561) protein is Aspartate carbamoyltransferase regulatory chain.